The primary structure comprises 175 residues: Major pollen allergen Pha a 5.4 (175 aa).

The protein belongs to the Poa p IX/Phl p VI allergen family.

This is Major pollen allergen Pha a 5.4 from Phalaris aquatica (Canary grass).